The primary structure comprises 123 residues: Seripauperin-16 (123 aa).

Positions 1-20 are cleaved as a signal peptide; it reads MVKLTSIAAGVAAIAAGVAA.

It belongs to the SRP1/TIP1 family. Seripauperin subfamily.

The polypeptide is Seripauperin-16 (PAU16) (Saccharomyces cerevisiae (strain ATCC 204508 / S288c) (Baker's yeast)).